A 241-amino-acid polypeptide reads, in one-letter code: DNA repair protein RecO (241 aa).

The protein belongs to the RecO family.

Its function is as follows. Involved in DNA repair and RecF pathway recombination. The protein is DNA repair protein RecO of Roseobacter denitrificans (strain ATCC 33942 / OCh 114) (Erythrobacter sp. (strain OCh 114)).